The chain runs to 262 residues: GTP cyclohydrolase 1 type 2 homolog (262 aa).

Residues H65, D102, H222, and E225 each coordinate a divalent metal cation.

This sequence belongs to the GTP cyclohydrolase I type 2/NIF3 family. Homohexamer.

This Streptococcus pyogenes serotype M6 (strain ATCC BAA-946 / MGAS10394) protein is GTP cyclohydrolase 1 type 2 homolog.